A 251-amino-acid polypeptide reads, in one-letter code: Ubiquinone/menaquinone biosynthesis C-methyltransferase UbiE (251 aa).

S-adenosyl-L-methionine contacts are provided by residues Thr-74, Asp-95, 123–124, and Ser-140; that span reads NA.

It belongs to the class I-like SAM-binding methyltransferase superfamily. MenG/UbiE family.

The enzyme catalyses a 2-demethylmenaquinol + S-adenosyl-L-methionine = a menaquinol + S-adenosyl-L-homocysteine + H(+). It carries out the reaction a 2-methoxy-6-(all-trans-polyprenyl)benzene-1,4-diol + S-adenosyl-L-methionine = a 5-methoxy-2-methyl-3-(all-trans-polyprenyl)benzene-1,4-diol + S-adenosyl-L-homocysteine + H(+). It functions in the pathway quinol/quinone metabolism; menaquinone biosynthesis; menaquinol from 1,4-dihydroxy-2-naphthoate: step 2/2. The protein operates within cofactor biosynthesis; ubiquinone biosynthesis. In terms of biological role, methyltransferase required for the conversion of demethylmenaquinol (DMKH2) to menaquinol (MKH2) and the conversion of 2-polyprenyl-6-methoxy-1,4-benzoquinol (DDMQH2) to 2-polyprenyl-3-methyl-6-methoxy-1,4-benzoquinol (DMQH2). This chain is Ubiquinone/menaquinone biosynthesis C-methyltransferase UbiE, found in Cronobacter sakazakii (strain ATCC BAA-894) (Enterobacter sakazakii).